The chain runs to 63 residues: Large ribosomal subunit protein bL28 (63 aa).

The disordered stretch occupies residues 1 to 20 (MSKRCAITGKGPMVGNNVSH).

This sequence belongs to the bacterial ribosomal protein bL28 family.

This chain is Large ribosomal subunit protein bL28, found in Campylobacter fetus subsp. fetus (strain 82-40).